The primary structure comprises 366 residues: Chorismate synthase (366 aa).

The NADP(+) site is built by arginine 48 and arginine 54. FMN-binding positions include 125–127 (RSS), 238–239 (NA), glycine 278, 293–297 (KPTSS), and arginine 319.

The protein belongs to the chorismate synthase family. In terms of assembly, homotetramer. The cofactor is FMNH2.

It carries out the reaction 5-O-(1-carboxyvinyl)-3-phosphoshikimate = chorismate + phosphate. Its pathway is metabolic intermediate biosynthesis; chorismate biosynthesis; chorismate from D-erythrose 4-phosphate and phosphoenolpyruvate: step 7/7. Catalyzes the anti-1,4-elimination of the C-3 phosphate and the C-6 proR hydrogen from 5-enolpyruvylshikimate-3-phosphate (EPSP) to yield chorismate, which is the branch point compound that serves as the starting substrate for the three terminal pathways of aromatic amino acid biosynthesis. This reaction introduces a second double bond into the aromatic ring system. The polypeptide is Chorismate synthase (Burkholderia multivorans (strain ATCC 17616 / 249)).